The sequence spans 802 residues: Endoplasmin (802 aa).

An N-terminal signal peptide occupies residues 1 to 21 (MRVLWVLGLCCVLLTFGFVRA). Positions 42–44 (SRT) match the SRT pseudosubstrate motif motif. Asn-62 is a glycosylation site (N-linked (GlcNAc...) asparagine). Position 64 is a phosphoserine (Ser-64). An N-linked (GlcNAc...) asparagine glycan is attached at Asn-107. The ATP site is built by Asn-107, Asp-149, and Asn-162. At Lys-168 the chain carries N6-(2-hydroxyisobutyryl)lysine. The residue at position 172 (Ser-172) is a Phosphoserine. ATP is bound at residue Phe-199. Asn-217 is a glycosylation site (N-linked (GlcNAc...) asparagine). Residues 290–317 (EEPLEEDEAAKEEKEESDDEAAVEEEEE) are compositionally biased toward acidic residues. The interval 290-323 (EEPLEEDEAAKEEKEESDDEAAVEEEEEEKKPKT) is disordered. Phosphoserine is present on residues Ser-306 and Ser-403. Lys-404 is subject to N6-succinyllysine. An N-linked (GlcNAc...) asparagine glycan is attached at Asn-445. Position 447 is a phosphoserine (Ser-447). N6-acetyllysine is present on Lys-479. 2 N-linked (GlcNAc...) asparagine glycosylation sites follow: Asn-481 and Asn-502. An N6-succinyllysine modification is found at Lys-633. The interval 749-802 (IDPEAQVEEEPEEEPEDTSEDAEDSEQDEGEEMDAGTEEEEEETEKESTEKDEL) is disordered. A compositionally biased stretch (acidic residues) spans 753–793 (AQVEEEPEEEPEDTSEDAEDSEQDEGEEMDAGTEEEEEETE). Thr-785 bears the Phosphothreonine mark. The short motif at 799 to 802 (KDEL) is the Prevents secretion from ER element.

This sequence belongs to the heat shock protein 90 family. In terms of assembly, homodimer; disulfide-linked. Component of an EIF2 complex at least composed of CELF1/CUGBP1, CALR, CALR3, EIF2S1, EIF2S2, HSP90B1 and HSPA5. Part of a large chaperone multiprotein complex comprising DNAJB11, HSP90B1, HSPA5, HYOU, PDIA2, PDIA4, PDIA6, PPIB, SDF2L1, UGGT1 and very small amounts of ERP29, but not, or at very low levels, CALR nor CANX. Hyperglycosylated form interacts with OS9; promoting its degradation by the endoplasmic reticulum associated degradation (ERAD). Interacts with AIMP1; regulates its retention in the endoplasmic reticulum. Interacts with CNPY3; this interaction is disrupted in the presence of ATP. Interacts with TLR4, TLR9 and TLR11, but not with TLR3. Interacts with MZB1 in a calcium-dependent manner. Interacts with METTL23. Interacts with IL1B; the interaction facilitates cargo translocation into the ERGIC. Interacts with EIF2AK3. In terms of processing, phosphorylated by CK2. Post-translationally, N-glycosylated cotranslationally at Asn-217 by STT3A-containing OST-A complex: this glycosylation is constitutive. In response to various stress, 5 additional facultative sites (Asn-62, Asn-107, Asn-445, Asn-481 and Asn-502) can be glycosylated post-translationally by STT3B-containing OST-B complex, leading to a hyperglycosylated form that is degraded by the ER-associated degradation (ERAD) pathway. In normal conditions, the OST-A complex together with CCDC134 prevent glycosylation at facultative sites during protein folding, thereby preventing hyperglycosylation. Mechanistically, nascent HSP90B1 is tethered during translation to a specialized CCDC134-containing translocon that forms a microenvironment for its folding, in which STT3A associates with the SRT pseudosubstrate motif, and prevents access to facultative glycosylation sites until folding is completed, rendering its facultative sites inaccessible to the OST-B complex.

Its subcellular location is the endoplasmic reticulum lumen. The protein localises to the sarcoplasmic reticulum lumen. The protein resides in the melanosome. It catalyses the reaction ATP + H2O = ADP + phosphate + H(+). Its function is as follows. ATP-dependent chaperone involved in the processing of proteins in the endoplasmic reticulum, regulating their transport. Together with MESD, acts as a modulator of the Wnt pathway by promoting the folding of LRP6, a coreceptor of the canonical Wnt pathway. When associated with CNPY3, required for proper folding of Toll-like receptors. Promotes folding and trafficking of TLR4 to the cell surface. May participate in the unfolding of cytosolic leaderless cargos (lacking the secretion signal sequence) such as the interleukin 1/IL-1 to facilitate their translocation into the ERGIC (endoplasmic reticulum-Golgi intermediate compartment) and secretion; the translocation process is mediated by the cargo receptor TMED10. The sequence is that of Endoplasmin (Hsp90b1) from Mus musculus (Mouse).